We begin with the raw amino-acid sequence, 439 residues long: tRNA modification GTPase MnmE (439 aa).

(6S)-5-formyl-5,6,7,8-tetrahydrofolate is bound by residues arginine 20, glutamate 78, and lysine 116. In terms of domain architecture, TrmE-type G spans 211–364 (GIYVTILGEP…LLNLIKQKVE (154 aa)). GTP is bound by residues 221–226 (NSGKST), 240–246 (SEYAGTT), and 265–268 (DTAG). Mg(2+)-binding residues include serine 225 and threonine 246. Lysine 439 is a (6S)-5-formyl-5,6,7,8-tetrahydrofolate binding site.

The protein belongs to the TRAFAC class TrmE-Era-EngA-EngB-Septin-like GTPase superfamily. TrmE GTPase family. Homodimer. Heterotetramer of two MnmE and two MnmG subunits. The cofactor is K(+).

It is found in the cytoplasm. Its function is as follows. Exhibits a very high intrinsic GTPase hydrolysis rate. Involved in the addition of a carboxymethylaminomethyl (cmnm) group at the wobble position (U34) of certain tRNAs, forming tRNA-cmnm(5)s(2)U34. This Ehrlichia chaffeensis (strain ATCC CRL-10679 / Arkansas) protein is tRNA modification GTPase MnmE.